A 113-amino-acid polypeptide reads, in one-letter code: Beta-defensin 112 (113 aa).

3 disulfides stabilise this stretch: Cys-54–Cys-82, Cys-61–Cys-75, and Cys-65–Cys-83.

This sequence belongs to the beta-defensin family.

Its subcellular location is the secreted. Its function is as follows. Has antibacterial activity. The protein is Beta-defensin 112 (DEFB112) of Homo sapiens (Human).